Consider the following 478-residue polypeptide: Patatin-like phospholipase domain-containing protein 2 (478 aa).

Topologically, residues 1 to 8 (MFPRETKW) are cytoplasmic. Residues 9 to 29 (NISFAGCGFLGVYHIGVASCL) traverse the membrane as a helical segment. Residues 10-179 (ISFAGCGFLG…SDNLPLYELK (170 aa)) form the PNPLA domain. Positions 14–19 (GCGFLG) match the GXGXXG motif. Topologically, residues 30–42 (REHAPFLVANATH) are extracellular. Asparagine 39 carries an N-linked (GlcNAc...) asparagine glycan. Residues 43 to 63 (IYGASAGALTATALVTGACLG) traverse the membrane as a helical segment. Residues 45–49 (GASAG) carry the GXSXG motif. Serine 47 (nucleophile) is an active-site residue. Residues 64–137 (EAGANIIEVS…IISHFSSKDE (74 aa)) lie on the Cytoplasmic side of the membrane. A Glycyl lysine isopeptide (Lys-Gly) (interchain with G-Cter in ubiquitin) cross-link involves residue lysine 92. Residues 138–158 (LIQANVCSTFIPVYCGLIPPT) form a helical membrane-spanning segment. Over 159–323 (LQGVRYVDGG…TTLSNMLPVR (165 aa)) the chain is Extracellular. Aspartate 166 (proton acceptor) is an active-site residue. The DGA/G motif lies at 166–168 (DGG). Residues 324-344 (LATAMMVPYTLPLESAVSFTI) form a helical membrane-spanning segment. Topologically, residues 345–478 (RLLEWLPDVP…PQDPSGLPPC (134 aa)) are cytoplasmic. Serine 366 is subject to Phosphoserine; in vitro. At serine 388 the chain carries Phosphoserine; by PKA. Phosphoserine occurs at positions 398 and 422. The segment at 456 to 478 (RAPASPTATDPATPQDPSGLPPC) is disordered. Over residues 457–478 (APASPTATDPATPQDPSGLPPC) the composition is skewed to low complexity. The residue at position 460 (serine 460) is a Phosphoserine; in vitro.

Interacts with ABHD5; this association stimulates PNPLA2 triglyceride hydrolase activity. Interacts with SERPINF1; this interaction stimulates the phospholipase A2 activity of PNPLA2. Despite a colocalization in lipid droplets, it probably does not interact with PLIN. Interacts with PLIN5; prevents interaction with ABHD5. Interacts with FAF2. Phosphorylation at Ser-398 by PKA is increased during fasting and moderate intensity exercise, and moderately increases lipolytic activity. In terms of processing, ubiquitinated by PEX2 in response to reactive oxygen species (ROS), leading to its degradation. Ubiquitination is stimulated by LDAH.

It localises to the lipid droplet. It is found in the cell membrane. The protein localises to the cytoplasm. It catalyses the reaction a triacylglycerol + H2O = a diacylglycerol + a fatty acid + H(+). The enzyme catalyses a triacylglycerol + H2O = a 1,2-diacylglycerol + a fatty acid + H(+). The catalysed reaction is a triacylglycerol + H2O = a 1,3-diacylglycerol + a fatty acid + H(+). It carries out the reaction a triacyl-sn-glycerol + H2O = a 1,3-diacyl-sn-glycerol + a fatty acid + H(+). It catalyses the reaction a triacyl-sn-glycerol + H2O = a 2,3-diacyl-sn-glycerol + a fatty acid + H(+). The enzyme catalyses a 1-acylglycerol + a 1,3-diacylglycerol = a triacylglycerol + glycerol. The catalysed reaction is a 1-acylglycerol + a 1,2-diacylglycerol = a triacylglycerol + glycerol. It carries out the reaction 2 a 1-acylglycerol = a 1,2-diacylglycerol + glycerol. It catalyses the reaction a triacylglycerol + all-trans-retinol = an all-trans-retinyl ester + a diacylglycerol. The enzyme catalyses 1,2-di-(9Z-octadecenoyl)-glycerol + (9Z)-octadecenoate + H(+) = 1,2,3-tri-(9Z-octadecenoyl)-glycerol + H2O. The catalysed reaction is 1,2,3-tri-(9Z-octadecenoyl)-glycerol + H2O = 1,3-di-(9Z-octadecenoyl)-glycerol + (9Z)-octadecenoate + H(+). It carries out the reaction 1-(9Z-octadecenoyl)-glycerol + 1,3-di-(9Z-octadecenoyl)-glycerol = 1,2,3-tri-(9Z-octadecenoyl)-glycerol + glycerol. It catalyses the reaction 1-(9Z-octadecenoyl)-glycerol + 1,2-di-(9Z-octadecenoyl)-glycerol = 1,2,3-tri-(9Z-octadecenoyl)-glycerol + glycerol. The enzyme catalyses 2 1-(9Z-octadecenoyl)-glycerol = 1,2-di-(9Z-octadecenoyl)-glycerol + glycerol. The catalysed reaction is 1,2,3-tri-(9Z-octadecenoyl)-glycerol + all-trans-retinol = all-trans-retinyl 9Z-octadecenoate + di-(9Z)-octadecenoylglycerol. It carries out the reaction 1,2,3-tri-(9Z)-hexadecenoylglycerol + H2O = 1,3-di-(9Z)-hexadecenoylglycerol + (9Z)-hexadecenoate + H(+). It catalyses the reaction 1,2,3-tri-(9Z,12Z)-octadecadienoylglycerol + H2O = 1,3-di-(9Z,12Z)-octadecadienoylglycerol + (9Z,12Z)-octadecadienoate + H(+). The enzyme catalyses 1,2,3-tri-(9Z,12Z,15Z)-octadecatrienoylglycerol + H2O = 1,3-di-(9Z,12Z,15Z)-octadecatrienoylglycerol + (9Z,12Z,15Z)-octadecatrienoate + H(+). The catalysed reaction is 1,3-di-(9Z)-octadecenoyl-2-hexadecanoylglycerol + H2O = 1,3-di-(9Z-octadecenoyl)-glycerol + hexadecanoate + H(+). It carries out the reaction 1,2-di-(9Z)-octadecenoyl-3-hexadecanoyl-sn-glycerol + H2O = 1-(9Z)-octadecenoyl-3-hexadecanoyl-sn-glycerol + (9Z)-octadecenoate + H(+). It catalyses the reaction 1-hexadecanoyl-2,3-di-(9Z)-octadecenoyl-sn-glycerol + H2O = 1-hexadecanoyl-3-(9Z)-octadecenoyl-sn-glycerol + (9Z)-octadecenoate + H(+). The enzyme catalyses 1,2,3-tri-(9Z-octadecenoyl)-glycerol + H2O = 2,3-di-(9Z)-octadecenoyl-sn-glycerol + (9Z)-octadecenoate + H(+). The catalysed reaction is 1,2,3-tri-(9Z)-hexadecenoylglycerol + H2O = 2,3-di-(9Z)-hexadecenoyl-sn-glycerol + (9Z)-hexadecenoate + H(+). It carries out the reaction 1,2,3-tri-(9Z,12Z)-octadecadienoylglycerol + H2O = 2,3-di-(9Z,12Z)-octadecadienoyl-sn-glycerol + (9Z,12Z)-octadecadienoate + H(+). It catalyses the reaction 1,2,3-tri-(9Z,12Z,15Z)-octadecatrienoylglycerol + H2O = 2,3-di-(9Z,12Z,15Z)-octadecatrienoyl-sn-glycerol + (9Z,12Z,15Z)-octadecatrienoate + H(+). The enzyme catalyses 1,3-di-(9Z)-octadecenoyl-2-hexadecanoylglycerol + H2O = 2-hexadecanoyl-3-(9Z)-octadecenoyl-sn-glycerol + (9Z)-octadecenoate + H(+). The catalysed reaction is 1-hexadecanoyl-2,3-di-(9Z)-octadecenoyl-sn-glycerol + H2O = 2,3-di-(9Z)-octadecenoyl-sn-glycerol + hexadecanoate + H(+). It carries out the reaction 1,2-di-(9Z)-octadecenoyl-3-hexadecanoyl-sn-glycerol + H2O = 2-(9Z-octadecenoyl)-3-hexadecanoyl-sn-glycerol + (9Z)-octadecenoate + H(+). It catalyses the reaction a 1,2-diacyl-sn-glycero-3-phosphocholine + H2O = a 1-acyl-sn-glycero-3-phosphocholine + a fatty acid + H(+). The enzyme catalyses 1,2,3-tri-(9Z-octadecenoyl)-glycerol + 9-hydroxy-octadecanoate = 9-(9Z-octadecenoyloxy)-octadecanoate + 2,3-di-(9Z)-octadecenoyl-sn-glycerol. The catalysed reaction is 1-hexadecanoyl-2,3-di-(9Z)-octadecenoyl-sn-glycerol + 9-hydroxy-octadecanoate = 9-hexadecanoyloxy-octadecanoate + 2,3-di-(9Z)-octadecenoyl-sn-glycerol. It carries out the reaction 1,2,3-tri-(10Z)-heptadecenoylglycerol + 9-hydroxy-octadecanoate = 2,3-di-(10Z-heptadecenoyl)-sn-glycerol + 9-(10Z-heptadecenoyloxy)-octadecanoate. It catalyses the reaction 1,2,3-tri-(9Z,12Z)-octadecadienoylglycerol + 9-hydroxy-octadecanoate = 2,3-di-(9Z,12Z)-octadecadienoyl-sn-glycerol + 9-(9Z,12Z-octadecadienoyloxy)-octadecanoate. The enzyme catalyses 1,2,3-tri-(9Z)-hexadecenoylglycerol + 9-hydroxy-octadecanoate = 2,3-di-(9Z)-hexadecenoyl-sn-glycerol + 9-(9Z-hexadecenoyloxy)-octadecanoate. The catalysed reaction is 9-hydroxy-octadecanoate + 1,2-di-(9Z-octadecenoyl)-sn-glycerol = 9-(9Z-octadecenoyloxy)-octadecanoate + 2-(9Z-octadecenoyl)-glycerol. It carries out the reaction 1-hexadecanoyl-2,3-di-(9Z)-octadecenoyl-sn-glycerol + 9-hydroxy-octadecanoate = 1-hexadecanoyl-3-(9Z)-octadecenoyl-sn-glycerol + 9-(9Z-octadecenoyloxy)-octadecanoate. The protein operates within glycerolipid metabolism; triacylglycerol degradation. Its function is as follows. Catalyzes the initial step in triglyceride hydrolysis in adipocyte and non-adipocyte lipid droplets. Exhibits a strong preference for the hydrolysis of long-chain fatty acid esters at the sn-2 position of the glycerol backbone and acts coordinately with LIPE/HLS and DGAT2 within the lipolytic cascade. Also possesses acylglycerol transacylase and phospholipase A2 activities. Transfers fatty acid from triglyceride to retinol, hydrolyzes retinylesters, and generates 1,3-diacylglycerol from triglycerides. Regulates adiposome size and may be involved in the degradation of adiposomes. Catalyzes the formation of an ester bond between hydroxy fatty acids and fatty acids derived from triglycerides or diglycerides to generate fatty acid esters of hydroxy fatty acids (FAHFAs) in adipocytes. Acts antagonistically with LDAH in regulation of cellular lipid stores. Inhibits LDAH-stimulated lipid droplet fusion. May play an important role in energy homeostasis. May play a role in the response of the organism to starvation, enhancing hydrolysis of triglycerides and providing free fatty acids to other tissues to be oxidized in situations of energy depletion. The sequence is that of Patatin-like phospholipase domain-containing protein 2 from Rattus norvegicus (Rat).